Consider the following 215-residue polypeptide: LexA repressor (215 aa).

Positions 28 to 48 (RAEIAAELGFSSPNAAEEHLR) form a DNA-binding region, H-T-H motif. Catalysis depends on for autocatalytic cleavage activity residues Ser133 and Lys170.

It belongs to the peptidase S24 family. In terms of assembly, homodimer.

The enzyme catalyses Hydrolysis of Ala-|-Gly bond in repressor LexA.. In terms of biological role, represses a number of genes involved in the response to DNA damage (SOS response), including recA and lexA. In the presence of single-stranded DNA, RecA interacts with LexA causing an autocatalytic cleavage which disrupts the DNA-binding part of LexA, leading to derepression of the SOS regulon and eventually DNA repair. The protein is LexA repressor of Burkholderia thailandensis (strain ATCC 700388 / DSM 13276 / CCUG 48851 / CIP 106301 / E264).